A 553-amino-acid chain; its full sequence is Phosphomethylpyrimidine synthase (553 aa).

Residues Asn192, Met221, Tyr250, His286, 306 to 308 (SRG), 347 to 350 (DGLR), and Glu386 contribute to the substrate site. His390 contributes to the Zn(2+) binding site. A substrate-binding site is contributed by Tyr413. His454 contributes to the Zn(2+) binding site. [4Fe-4S] cluster contacts are provided by Cys534, Cys537, and Cys542.

This sequence belongs to the ThiC family. As to quaternary structure, homodimer. [4Fe-4S] cluster is required as a cofactor.

The catalysed reaction is 5-amino-1-(5-phospho-beta-D-ribosyl)imidazole + S-adenosyl-L-methionine = 4-amino-2-methyl-5-(phosphooxymethyl)pyrimidine + CO + 5'-deoxyadenosine + formate + L-methionine + 3 H(+). It functions in the pathway cofactor biosynthesis; thiamine diphosphate biosynthesis. Its function is as follows. Catalyzes the synthesis of the hydroxymethylpyrimidine phosphate (HMP-P) moiety of thiamine from aminoimidazole ribotide (AIR) in a radical S-adenosyl-L-methionine (SAM)-dependent reaction. The protein is Phosphomethylpyrimidine synthase of Anaplasma marginale (strain St. Maries).